The following is a 178-amino-acid chain: Large ribosomal subunit protein uL10 (178 aa).

This sequence belongs to the universal ribosomal protein uL10 family. Part of the ribosomal stalk of the 50S ribosomal subunit. The N-terminus interacts with L11 and the large rRNA to form the base of the stalk. The C-terminus forms an elongated spine to which L12 dimers bind in a sequential fashion forming a multimeric L10(L12)X complex.

Forms part of the ribosomal stalk, playing a central role in the interaction of the ribosome with GTP-bound translation factors. This is Large ribosomal subunit protein uL10 from Gloeothece citriformis (strain PCC 7424) (Cyanothece sp. (strain PCC 7424)).